The sequence spans 374 residues: Phospho-N-acetylmuramoyl-pentapeptide-transferase (374 aa).

The next 10 membrane-spanning stretches (helical) occupy residues 3 to 23, 52 to 72, 85 to 105, 125 to 145, 170 to 190, 201 to 221, 244 to 264, 271 to 291, 294 to 314, and 350 to 370; these read AVIVAVGVAFLVSLFCTPIAI, MGGVVFILATVIAYVAGHLAL, PTITALVLLGLMVFSGAVGFI, LLGQILVGAVFGVIALYFPST, IPALELTKVGAVVLFIFVVMA, LDGLATGASVMVLAAYALIAF, PLEIALIAGAAAGACVGFLWW, IFMGDTGALGLGGLIAGMAMS, TILLLPIIGGLFVIITMSVVI, and FWIIAGIGVAIALGLFYSEFL.

It belongs to the glycosyltransferase 4 family. MraY subfamily. Mg(2+) is required as a cofactor.

The protein resides in the cell membrane. The enzyme catalyses UDP-N-acetyl-alpha-D-muramoyl-L-alanyl-gamma-D-glutamyl-meso-2,6-diaminopimeloyl-D-alanyl-D-alanine + di-trans,octa-cis-undecaprenyl phosphate = di-trans,octa-cis-undecaprenyl diphospho-N-acetyl-alpha-D-muramoyl-L-alanyl-D-glutamyl-meso-2,6-diaminopimeloyl-D-alanyl-D-alanine + UMP. Its pathway is cell wall biogenesis; peptidoglycan biosynthesis. Its function is as follows. Catalyzes the initial step of the lipid cycle reactions in the biosynthesis of the cell wall peptidoglycan: transfers peptidoglycan precursor phospho-MurNAc-pentapeptide from UDP-MurNAc-pentapeptide onto the lipid carrier undecaprenyl phosphate, yielding undecaprenyl-pyrophosphoryl-MurNAc-pentapeptide, known as lipid I. This Salinispora arenicola (strain CNS-205) protein is Phospho-N-acetylmuramoyl-pentapeptide-transferase.